The following is a 438-amino-acid chain: Thymidine phosphorylase (438 aa).

It belongs to the thymidine/pyrimidine-nucleoside phosphorylase family. In terms of assembly, homodimer.

The enzyme catalyses thymidine + phosphate = 2-deoxy-alpha-D-ribose 1-phosphate + thymine. The protein operates within pyrimidine metabolism; dTMP biosynthesis via salvage pathway; dTMP from thymine: step 1/2. In terms of biological role, the enzymes which catalyze the reversible phosphorolysis of pyrimidine nucleosides are involved in the degradation of these compounds and in their utilization as carbon and energy sources, or in the rescue of pyrimidine bases for nucleotide synthesis. The sequence is that of Thymidine phosphorylase from Sinorhizobium medicae (strain WSM419) (Ensifer medicae).